Reading from the N-terminus, the 703-residue chain is Ion-translocating oxidoreductase complex subunit C (703 aa).

4Fe-4S ferredoxin-type domains are found at residues Tyr-369–Tyr-398 and Lys-408–Phe-437. [4Fe-4S] cluster contacts are provided by Cys-378, Cys-381, Cys-384, Cys-388, Cys-417, Cys-420, Cys-423, and Cys-427. Disordered stretches follow at residues Arg-467–Ser-542 and Arg-555–Ala-680. Over residues Ala-485–Asp-497 the composition is skewed to basic and acidic residues. A compositionally biased stretch (low complexity) spans Asn-559 to Ala-577. Residues Asp-578–Ala-592 are compositionally biased toward polar residues. Composition is skewed to low complexity over residues Ala-598–Thr-629 and Ala-641–Ala-669.

Belongs to the 4Fe4S bacterial-type ferredoxin family. RnfC subfamily. In terms of assembly, the complex is composed of six subunits: RnfA, RnfB, RnfC, RnfD, RnfE and RnfG. [4Fe-4S] cluster serves as cofactor.

The protein localises to the cell inner membrane. In terms of biological role, part of a membrane-bound complex that couples electron transfer with translocation of ions across the membrane. This Actinobacillus succinogenes (strain ATCC 55618 / DSM 22257 / CCUG 43843 / 130Z) protein is Ion-translocating oxidoreductase complex subunit C.